Reading from the N-terminus, the 194-residue chain is MQVILLERVAKLGQMGEVVKVKDGFARNFLLPQGKALRASDANIQAFEARKAELASRNDETRAEAEKIAEKLDGQTFVIIRSASDAGALYGSVTPRDAADVAIAEGFAVERRQVVLTAPIKELGLHEVRVHLHPEVDVTIKLNVARSAEEAELQASGKSIQELAAEEEAAAEFEIAELFDDIGSAGRDEDEAAN.

It belongs to the bacterial ribosomal protein bL9 family.

Its function is as follows. Binds to the 23S rRNA. The chain is Large ribosomal subunit protein bL9 from Paracoccus denitrificans (strain Pd 1222).